A 444-amino-acid polypeptide reads, in one-letter code: Argininosuccinate synthase (444 aa).

ATP-binding positions include A18–S26 and A44. Position 100 (Y100) interacts with L-citrulline. Residues G130 and T132 each contribute to the ATP site. Residues T132, N136, and D137 each contribute to the L-aspartate site. N136 is an L-citrulline binding site. D137 is an ATP binding site. L-citrulline-binding residues include R140 and S193. D195 provides a ligand contact to ATP. T202, E204, and E281 together coordinate L-citrulline.

It belongs to the argininosuccinate synthase family. Type 2 subfamily. Homotetramer.

The protein localises to the cytoplasm. It catalyses the reaction L-citrulline + L-aspartate + ATP = 2-(N(omega)-L-arginino)succinate + AMP + diphosphate + H(+). It functions in the pathway amino-acid biosynthesis; L-arginine biosynthesis; L-arginine from L-ornithine and carbamoyl phosphate: step 2/3. This Haemophilus influenzae (strain PittEE) protein is Argininosuccinate synthase.